Consider the following 418-residue polypeptide: Coenzyme A biosynthesis bifunctional protein CoaBC (418 aa).

The segment at 1–195 (MVDHKRIPKQ…ALPYDLAGRK (195 aa)) is phosphopantothenoylcysteine decarboxylase. The interval 196 to 418 (LLVTAGGTRE…IVTFLAGCSS (223 aa)) is phosphopantothenate--cysteine ligase. The CTP site is built by Asp-285, Lys-295, Phe-336, Lys-354, and Lys-358.

In the N-terminal section; belongs to the HFCD (homo-oligomeric flavin containing Cys decarboxylase) superfamily. The protein in the C-terminal section; belongs to the PPC synthetase family. Requires Mg(2+) as cofactor. FMN is required as a cofactor.

It catalyses the reaction N-[(R)-4-phosphopantothenoyl]-L-cysteine + H(+) = (R)-4'-phosphopantetheine + CO2. It carries out the reaction (R)-4'-phosphopantothenate + L-cysteine + CTP = N-[(R)-4-phosphopantothenoyl]-L-cysteine + CMP + diphosphate + H(+). It participates in cofactor biosynthesis; coenzyme A biosynthesis; CoA from (R)-pantothenate: step 2/5. Its pathway is cofactor biosynthesis; coenzyme A biosynthesis; CoA from (R)-pantothenate: step 3/5. Its function is as follows. Catalyzes two sequential steps in the biosynthesis of coenzyme A. In the first step cysteine is conjugated to 4'-phosphopantothenate to form 4-phosphopantothenoylcysteine. In the second step the latter compound is decarboxylated to form 4'-phosphopantotheine. This Mycobacterium bovis (strain ATCC BAA-935 / AF2122/97) protein is Coenzyme A biosynthesis bifunctional protein CoaBC.